A 357-amino-acid polypeptide reads, in one-letter code: Holliday junction branch migration complex subunit RuvB (357 aa).

Positions 1-15 are enriched in low complexity; that stretch reads MAIQSDSLSSLPDSP. The interval 1–30 is disordered; it reads MAIQSDSLSSLPDSPRIVAPQPVSPNEESI. Residues 13–195 form a large ATPase domain (RuvB-L) region; it reads DSPRIVAPQP…FGIVSRLEFY (183 aa). Residues leucine 34, arginine 35, glycine 76, lysine 79, threonine 80, threonine 81, 142-144, arginine 185, tyrosine 195, and arginine 232 each bind ATP; that span reads EDF. Mg(2+) is bound at residue threonine 80. Residues 196 to 266 are small ATPAse domain (RuvB-S); it reads NTDELARIVT…AAGRALAMLD (71 aa). Residues 269 to 357 are head domain (RuvB-H); the sequence is PQGLDVMDRK…SGGTGELFSK (89 aa). DNA contacts are provided by arginine 305, arginine 324, and arginine 329.

This sequence belongs to the RuvB family. In terms of assembly, homohexamer. Forms an RuvA(8)-RuvB(12)-Holliday junction (HJ) complex. HJ DNA is sandwiched between 2 RuvA tetramers; dsDNA enters through RuvA and exits via RuvB. An RuvB hexamer assembles on each DNA strand where it exits the tetramer. Each RuvB hexamer is contacted by two RuvA subunits (via domain III) on 2 adjacent RuvB subunits; this complex drives branch migration. In the full resolvosome a probable DNA-RuvA(4)-RuvB(12)-RuvC(2) complex forms which resolves the HJ.

It localises to the cytoplasm. It catalyses the reaction ATP + H2O = ADP + phosphate + H(+). Its function is as follows. The RuvA-RuvB-RuvC complex processes Holliday junction (HJ) DNA during genetic recombination and DNA repair, while the RuvA-RuvB complex plays an important role in the rescue of blocked DNA replication forks via replication fork reversal (RFR). RuvA specifically binds to HJ cruciform DNA, conferring on it an open structure. The RuvB hexamer acts as an ATP-dependent pump, pulling dsDNA into and through the RuvAB complex. RuvB forms 2 homohexamers on either side of HJ DNA bound by 1 or 2 RuvA tetramers; 4 subunits per hexamer contact DNA at a time. Coordinated motions by a converter formed by DNA-disengaged RuvB subunits stimulates ATP hydrolysis and nucleotide exchange. Immobilization of the converter enables RuvB to convert the ATP-contained energy into a lever motion, pulling 2 nucleotides of DNA out of the RuvA tetramer per ATP hydrolyzed, thus driving DNA branch migration. The RuvB motors rotate together with the DNA substrate, which together with the progressing nucleotide cycle form the mechanistic basis for DNA recombination by continuous HJ branch migration. Branch migration allows RuvC to scan DNA until it finds its consensus sequence, where it cleaves and resolves cruciform DNA. This is Holliday junction branch migration complex subunit RuvB from Bordetella bronchiseptica (strain ATCC BAA-588 / NCTC 13252 / RB50) (Alcaligenes bronchisepticus).